The primary structure comprises 220 residues: 7-cyano-7-deazaguanine synthase (220 aa).

7-17 (LSGGMDSSTLA) serves as a coordination point for ATP. Zn(2+)-binding residues include C187, C195, C198, and C201.

The protein belongs to the QueC family. The cofactor is Zn(2+).

The enzyme catalyses 7-carboxy-7-deazaguanine + NH4(+) + ATP = 7-cyano-7-deazaguanine + ADP + phosphate + H2O + H(+). The protein operates within purine metabolism; 7-cyano-7-deazaguanine biosynthesis. Catalyzes the ATP-dependent conversion of 7-carboxy-7-deazaguanine (CDG) to 7-cyano-7-deazaguanine (preQ(0)). This Methanospirillum hungatei JF-1 (strain ATCC 27890 / DSM 864 / NBRC 100397 / JF-1) protein is 7-cyano-7-deazaguanine synthase.